A 181-amino-acid chain; its full sequence is Organelle RRM domain-containing protein 6, chloroplastic (181 aa).

The transit peptide at 1–44 (MAISLGRVVVPSCTISGDRLFIPNFSAICSVSCGRINVGTGVIS) directs the protein to the chloroplast. Positions 77-155 (TKLYVSGLSF…RVIFVEEAKT (79 aa)) constitute an RRM domain. Residues 155 to 169 (TRSDMSRAKPRRDFP) show a composition bias toward basic and acidic residues. A disordered region spans residues 155–181 (TRSDMSRAKPRRDFPKPQSKPRTFRTW).

Interacts with MORF8/RIP1, MORF2/RIP2, MORF9/RIP9 and VAR3/OZ1.

The protein localises to the plastid. It is found in the chloroplast. Its function is as follows. Involved in C-to-U editing of chloroplastic RNA. Required for the photosynthetic subunit psbF transcript editing in chloroplast. This Arabidopsis thaliana (Mouse-ear cress) protein is Organelle RRM domain-containing protein 6, chloroplastic.